A 228-amino-acid polypeptide reads, in one-letter code: FCS-Like Zinc finger 12 (228 aa).

An FLZ-type zinc finger spans residues 162 to 205 (DFLTSCCLCKKKLQGKDIYMYKGDEGFCSKECRSLKIMEDSLKE).

This sequence belongs to the FLZ family. As to quaternary structure, interacts with KIN10 and KIN11 via its FLZ-type zinc finger domain. Interacts with KINB1 and KINB2 via its N-terminal part. Forms homodimer and heterodimer with FLZ2 and FLZ10 in vitro.

May act as an adapter to facilitate the interaction of SnRK1 complex with effector proteins, conferring tissue- and stimulus-type specific differences in the SnRK1 regulation pathway. This chain is FCS-Like Zinc finger 12, found in Arabidopsis thaliana (Mouse-ear cress).